The primary structure comprises 299 residues: Protoheme IX farnesyltransferase (299 aa).

Transmembrane regions (helical) follow at residues 25–45, 47–67, 95–115, 119–139, 147–167, 173–193, 218–238, 243–263, and 279–299; these read VVVL…RAGV, WTVL…AAAV, LAAL…LLTF, LAAW…TGFL, IVIG…AVSG, PLLL…ALAI, LHIL…YAIH, LYLL…WALY, and IRYL…PLTL.

Belongs to the UbiA prenyltransferase family. Protoheme IX farnesyltransferase subfamily.

The protein localises to the cell inner membrane. The catalysed reaction is heme b + (2E,6E)-farnesyl diphosphate + H2O = Fe(II)-heme o + diphosphate. The protein operates within porphyrin-containing compound metabolism; heme O biosynthesis; heme O from protoheme: step 1/1. Its function is as follows. Converts heme B (protoheme IX) to heme O by substitution of the vinyl group on carbon 2 of heme B porphyrin ring with a hydroxyethyl farnesyl side group. This Azotobacter vinelandii (strain DJ / ATCC BAA-1303) protein is Protoheme IX farnesyltransferase.